A 340-amino-acid polypeptide reads, in one-letter code: Pre-rRNA-processing protein esf-2 (340 aa).

Basic and acidic residues-rich tracts occupy residues 1-12 (MPEDDVRNKFLD) and 19-32 (DAGHGSDSEDDFQK). The disordered stretch occupies residues 1 to 103 (MPEDDVRNKF…KSVLASDLPG (103 aa)). Acidic residues predominate over residues 44–64 (DDEDSEADDFTDAEEEHDQDD). The span at 65-95 (AESKDAPAKDGQETTDGKEKKDGKKEKEKKS) shows a compositional bias: basic and acidic residues. Positions 124–214 (GVVYISRVPP…KKGSYYRDDI (91 aa)) constitute an RRM domain. The tract at residues 272–329 (AKKASKGSKAGGEGAAQVTESTIPSAAATTTTTTNDDKRRTFKQIPLAKKRKLDETQP) is disordered.

This sequence belongs to the ESF2/ABP1 family.

It is found in the nucleus. The protein resides in the nucleolus. Functionally, involved in the small subunit (SSU) processome assembly and function, and in the 18S rRNA synthesis. Required for the early cleavages at sites A0, A1 and A2. This is Pre-rRNA-processing protein esf-2 (esf-2) from Neurospora crassa (strain ATCC 24698 / 74-OR23-1A / CBS 708.71 / DSM 1257 / FGSC 987).